Here is a 240-residue protein sequence, read N- to C-terminus: Adapter protein MecA (240 aa).

The protein belongs to the MecA family. In terms of assembly, homodimer.

In terms of biological role, enables the recognition and targeting of unfolded and aggregated proteins to the ClpC protease or to other proteins involved in proteolysis. In Streptococcus mutans serotype c (strain ATCC 700610 / UA159), this protein is Adapter protein MecA.